The primary structure comprises 295 residues: Small ribosomal subunit protein uS2 (295 aa).

The protein belongs to the universal ribosomal protein uS2 family. As to quaternary structure, component of the small ribosomal subunit. Mature ribosomes consist of a small (40S) and a large (60S) subunit. The 40S subunit contains about 33 different proteins and 1 molecule of RNA (18S). The 60S subunit contains about 49 different proteins and 3 molecules of RNA (25S, 5.8S and 5S). Interacts with RPS21.

The protein resides in the cytoplasm. Functionally, required for the assembly and/or stability of the 40S ribosomal subunit. Required for the processing of the 20S rRNA-precursor to mature 18S rRNA in a late step of the maturation of 40S ribosomal subunits. The chain is Small ribosomal subunit protein uS2 from Paracoccidioides brasiliensis (strain Pb03).